The chain runs to 343 residues: GTPase Obg (343 aa).

Positions 1–159 (MKFVDSASIF…LQLDMELKLM (159 aa)) constitute an Obg domain. Residues 121-144 (GHGGRGNQHFATSTNQAPRRSEPG) form a disordered region. The span at 129 to 138 (HFATSTNQAP) shows a compositional bias: polar residues. Residues 160–323 (ADVGLVGFPN…LKDELWREVS (164 aa)) form the OBG-type G domain. GTP-binding positions include 166–173 (GFPNAGKS), 191–195 (FTTLV), 213–216 (DIPG), 280–283 (TKMD), and 304–306 (SSV). Mg(2+) contacts are provided by Ser-173 and Thr-193. The segment at 322–343 (VSMRDRPEESSDPEGEGDGGTP) is disordered. Positions 331-343 (SSDPEGEGDGGTP) are enriched in acidic residues.

The protein belongs to the TRAFAC class OBG-HflX-like GTPase superfamily. OBG GTPase family. Monomer. The cofactor is Mg(2+).

It localises to the cytoplasm. In terms of biological role, an essential GTPase which binds GTP, GDP and possibly (p)ppGpp with moderate affinity, with high nucleotide exchange rates and a fairly low GTP hydrolysis rate. Plays a role in control of the cell cycle, stress response, ribosome biogenesis and in those bacteria that undergo differentiation, in morphogenesis control. The chain is GTPase Obg from Chlorobium luteolum (strain DSM 273 / BCRC 81028 / 2530) (Pelodictyon luteolum).